We begin with the raw amino-acid sequence, 425 residues long: Imidazolonepropionase (425 aa).

Histidine 82 and histidine 84 together coordinate Fe(3+). 2 residues coordinate Zn(2+): histidine 82 and histidine 84. Positions 91, 154, and 187 each coordinate 4-imidazolone-5-propanoate. Tyrosine 154 serves as a coordination point for N-formimidoyl-L-glutamate. Position 253 (histidine 253) interacts with Fe(3+). A Zn(2+)-binding site is contributed by histidine 253. Glutamate 256 lines the 4-imidazolone-5-propanoate pocket. Aspartate 328 contributes to the Fe(3+) binding site. Aspartate 328 lines the Zn(2+) pocket. Residues asparagine 330 and glycine 332 each coordinate N-formimidoyl-L-glutamate. Serine 333 is a 4-imidazolone-5-propanoate binding site.

The protein belongs to the metallo-dependent hydrolases superfamily. HutI family. Zn(2+) serves as cofactor. It depends on Fe(3+) as a cofactor.

The protein localises to the cytoplasm. The catalysed reaction is 4-imidazolone-5-propanoate + H2O = N-formimidoyl-L-glutamate. It participates in amino-acid degradation; L-histidine degradation into L-glutamate; N-formimidoyl-L-glutamate from L-histidine: step 3/3. Catalyzes the hydrolytic cleavage of the carbon-nitrogen bond in imidazolone-5-propanoate to yield N-formimidoyl-L-glutamate. It is the third step in the universal histidine degradation pathway. The sequence is that of Imidazolonepropionase from Symbiobacterium thermophilum (strain DSM 24528 / JCM 14929 / IAM 14863 / T).